The following is a 112-amino-acid chain: UPF0122 protein CPF_1968 (112 aa).

The protein belongs to the UPF0122 family.

Might take part in the signal recognition particle (SRP) pathway. This is inferred from the conservation of its genetic proximity to ftsY/ffh. May be a regulatory protein. The sequence is that of UPF0122 protein CPF_1968 from Clostridium perfringens (strain ATCC 13124 / DSM 756 / JCM 1290 / NCIMB 6125 / NCTC 8237 / Type A).